Reading from the N-terminus, the 86-residue chain is Anti-adapter protein IraP (86 aa).

A coiled-coil region spans residues 1–38; the sequence is MKNLIAELLVKLAQKEEEAKELTVQVEALEIVVTALLR.

The protein belongs to the IraP family. Interacts with RssB.

It localises to the cytoplasm. Inhibits RpoS proteolysis by regulating RssB activity, thereby increasing the stability of the sigma stress factor RpoS especially during phosphate starvation, but also in stationary phase and during nitrogen starvation. Its effect on RpoS stability is due to its interaction with RssB, which probably blocks the interaction of RssB with RpoS, and the consequent delivery of the RssB-RpoS complex to the ClpXP protein degradation pathway. The chain is Anti-adapter protein IraP from Klebsiella pneumoniae (strain 342).